Here is a 361-residue protein sequence, read N- to C-terminus: Mitogen-activated protein kinase 14 (361 aa).

The Protein kinase domain occupies 32–316 (YVPIKPIGRG…VSDALLHPYM (285 aa)). Residues 38–46 (IGRGAYGVV) and K61 each bind ATP. D158 functions as the Proton acceptor in the catalytic mechanism. A Phosphothreonine modification is found at T188. The TXY signature appears at 188–190 (TEY). Y190 bears the Phosphotyrosine mark. T193 carries the post-translational modification Phosphothreonine.

This sequence belongs to the protein kinase superfamily. CMGC Ser/Thr protein kinase family. MAP kinase subfamily. Interacts with MKK3. In terms of processing, dually phosphorylated on Thr-188 and Tyr-190, which activates the enzyme.

It catalyses the reaction L-seryl-[protein] + ATP = O-phospho-L-seryl-[protein] + ADP + H(+). The enzyme catalyses L-threonyl-[protein] + ATP = O-phospho-L-threonyl-[protein] + ADP + H(+). With respect to regulation, activated by threonine and tyrosine phosphorylation. The chain is Mitogen-activated protein kinase 14 (MPK14) from Arabidopsis thaliana (Mouse-ear cress).